The primary structure comprises 193 residues: dTTP/UTP pyrophosphatase (193 aa).

Aspartate 77 serves as the catalytic Proton acceptor.

Belongs to the Maf family. YhdE subfamily. A divalent metal cation is required as a cofactor.

The protein resides in the cytoplasm. The enzyme catalyses dTTP + H2O = dTMP + diphosphate + H(+). The catalysed reaction is UTP + H2O = UMP + diphosphate + H(+). Nucleoside triphosphate pyrophosphatase that hydrolyzes dTTP and UTP. May have a dual role in cell division arrest and in preventing the incorporation of modified nucleotides into cellular nucleic acids. This Bacteroides fragilis (strain YCH46) protein is dTTP/UTP pyrophosphatase.